The sequence spans 139 residues: Lysozyme (139 aa).

The first 19 residues, 1–19, serve as a signal peptide directing secretion; it reads MTKYVILLAVLAFALHCDA. The region spanning 20-139 is the C-type lysozyme domain; that stretch reads KRFTRCGLVQ…QHGLPDISDC (120 aa). 4 disulfide bridges follow: cysteine 25–cysteine 139, cysteine 46–cysteine 129, cysteine 81–cysteine 95, and cysteine 91–cysteine 109. Active-site residues include glutamate 51 and aspartate 69.

Belongs to the glycosyl hydrolase 22 family.

It carries out the reaction Hydrolysis of (1-&gt;4)-beta-linkages between N-acetylmuramic acid and N-acetyl-D-glucosamine residues in a peptidoglycan and between N-acetyl-D-glucosamine residues in chitodextrins.. In terms of biological role, lysozymes have primarily a bacteriolytic function; those in tissues and body fluids are associated with the monocyte-macrophage system and enhance the activity of immunoagents. The protein is Lysozyme of Hyalophora cecropia (Cecropia moth).